We begin with the raw amino-acid sequence, 63 residues long: Large ribosomal subunit protein bL28 (63 aa).

It belongs to the bacterial ribosomal protein bL28 family.

The chain is Large ribosomal subunit protein bL28 from Desulfatibacillum aliphaticivorans.